Consider the following 199-residue polypeptide: Recombination protein RecR (199 aa).

The segment at 56 to 71 adopts a C4-type zinc-finger fold; that stretch reads CRSCFNVAQSELCRIC. Positions 79-174 constitute a Toprim domain; it reads SSICVVEEPK…KVTRLASGLP (96 aa).

It belongs to the RecR family.

Functionally, may play a role in DNA repair. It seems to be involved in an RecBC-independent recombinational process of DNA repair. It may act with RecF and RecO. The polypeptide is Recombination protein RecR (Frankia casuarinae (strain DSM 45818 / CECT 9043 / HFP020203 / CcI3)).